Consider the following 212-residue polypeptide: Neuroendocrine protein 7B2 (212 aa).

The first 26 residues, 1 to 26 (MVSRMVSTMLSGLLFWLASGWTPAFA), serve as a signal peptide directing secretion. Cys120 and Cys130 are oxidised to a cystine. Phosphoserine occurs at positions 141 and 205. The tract at residues 174–212 (GGERRKRRSVNPYLQGQRLDNVVAKKSVPHFSDEDKDPE) is disordered.

Belongs to the 7B2 family. Interacts with PCSK2/PC2 early in the secretory pathway. Dissociation occurs at later stages. In terms of processing, proteolytically cleaved in the Golgi by a furin-like convertase to generate bioactive peptides. Post-translationally, sulfated on tyrosine residues.

Its subcellular location is the secreted. Acts as a molecular chaperone for PCSK2/PC2, preventing its premature activation in the regulated secretory pathway. Binds to inactive PCSK2 in the endoplasmic reticulum and facilitates its transport from there to later compartments of the secretory pathway where it is proteolytically matured and activated. Also required for cleavage of PCSK2 but does not appear to be involved in its folding. Plays a role in regulating pituitary hormone secretion. The C-terminal peptide inhibits PCSK2 in vitro. This is Neuroendocrine protein 7B2 (SCG5) from Homo sapiens (Human).